We begin with the raw amino-acid sequence, 371 residues long: E3 ubiquitin-protein ligase RHF1A (371 aa).

The RING-type; atypical zinc finger occupies 46–87 (CSICLEPFTLQDPSTVTSCKHEYHLQCIIEWSQRSKECPICW). Disordered regions lie at residues 199 to 254 (HQNS…SSLP) and 348 to 371 (EANSKSNNNGDKTEPQKLQGGETC). The span at 200–225 (QNSNPCPSPGSMTPSPVSGHSSIPAD) shows a compositional bias: polar residues. Residues 226–252 (SNNGSRISPGPSPSRSSQSPKSPEASS) are compositionally biased toward low complexity.

In terms of assembly, interacts with KRP6. Expressed in stems, flowers, green siliques, cauline leaves, seeds and roots.

The catalysed reaction is S-ubiquitinyl-[E2 ubiquitin-conjugating enzyme]-L-cysteine + [acceptor protein]-L-lysine = [E2 ubiquitin-conjugating enzyme]-L-cysteine + N(6)-ubiquitinyl-[acceptor protein]-L-lysine.. It functions in the pathway protein modification; protein ubiquitination. Its function is as follows. E3 ubiquitin-protein ligase involved in the positive regulation of the gametogenesis progression. Mediates the proteasomal degradation of KRP6, a cyclin-dependent kinase inhibitor which accumulates during meiosis and blocks the progression of subsequent mitoses during gametophyte development. Functions in association with RHF2A. Possesses E3 ubiquitin-protein ligase activity when associated with the E2 enzyme UBC8 in vitro. The polypeptide is E3 ubiquitin-protein ligase RHF1A (Arabidopsis thaliana (Mouse-ear cress)).